The chain runs to 337 residues: Protein ABHD13 (337 aa).

Residues 37-57 (FHLYGGIVLLLLIFVSIAGIL) traverse the membrane as a helical; Signal-anchor for type II membrane protein segment. Active-site charge relay system residues include S193, D268, and H298. N-linked (GlcNAc...) asparagine glycosylation occurs at N299.

The protein belongs to the serine esterase family.

It localises to the membrane. The protein is Protein ABHD13 of Mus musculus (Mouse).